Here is a 433-residue protein sequence, read N- to C-terminus: O-methyltransferase hasC (433 aa).

Residues Glu-265 and 293–295 contribute to the S-adenosyl-L-methionine site; that span reads GDF. The active-site Proton acceptor is the His-313. The segment at 413–433 is disordered; that stretch reads SPRANGNGNSAGGLEWESELM.

This sequence belongs to the class I-like SAM-binding methyltransferase superfamily. Cation-independent O-methyltransferase family. COMT subfamily.

It participates in secondary metabolite biosynthesis. O-methyltransferase; part of the gene cluster that mediates the biosynthesis of hexadehydro-astechrome (HAS), a tryptophan-derived iron(III)-complex that acts as a virulence factor in infected mice. Within the pathway, hasC, with the cytochrome P450 monooxygenase hasH and the FAD-linked oxidoreductase hasG, convert the hasE-prenylated Trp-Ala-dipeptide into an O-methylated diketopiperazine that is then released from the hasD NRPS. The HAS biosynthesis begins with the synthesis of a tethered Trp-Ala dipeptide by the NRPS hasD. The 7-dimethylallyltryptophan synthase hasE then catalyzes the prenylation of the hasD-tethered tryptophan or the resulting tethered Trp-Ala dipeptide at the C-7 position of the indole moiety. HAS biosynthesis continues via tethered intermediates with the succesive actions of the cytochrome P450 monooxygenase hasH, the O-methyltransferase hasC, and the FAD-linked oxidoreductase hasG. The resulting O-methylated diketopiperazine is then released from hasD. Finally, three O-methylated diketopiperazine molecules assemble in a trimeric complex with Fe(III) to produce hexadehydro-astechrome. The protein is O-methyltransferase hasC of Aspergillus fumigatus (strain CBS 144.89 / FGSC A1163 / CEA10) (Neosartorya fumigata).